The following is a 393-amino-acid chain: Probable RNA methyltransferase sce3898 (393 aa).

Glu82 (proton acceptor) is an active-site residue. The Radical SAM core domain occupies 90–329 (RPGRYSACVS…VRSARLDAFR (240 aa)). Cys97 and Cys353 are joined by a disulfide. [4Fe-4S] cluster contacts are provided by Cys104, Cys108, and Cys111. Residues 157 to 158 (GE), 212 to 214 (SLG), and Asn294 each bind S-adenosyl-L-methionine. The active-site S-methylcysteine intermediate is Cys353. Positions 357–393 (ARPSAEAQRPGGRRAPPRPGATAGAADVGPSAPPRPA) are disordered. The span at 373 to 382 (PRPGATAGAA) shows a compositional bias: low complexity.

The protein belongs to the radical SAM superfamily. RlmN family. Requires [4Fe-4S] cluster as cofactor.

It is found in the cytoplasm. The polypeptide is Probable RNA methyltransferase sce3898 (Sorangium cellulosum (strain So ce56) (Polyangium cellulosum (strain So ce56))).